The sequence spans 102 residues: Flagellar hook-basal body complex protein FliE (102 aa).

It belongs to the FliE family.

Its subcellular location is the bacterial flagellum basal body. The chain is Flagellar hook-basal body complex protein FliE from Halalkalibacterium halodurans (strain ATCC BAA-125 / DSM 18197 / FERM 7344 / JCM 9153 / C-125) (Bacillus halodurans).